A 255-amino-acid polypeptide reads, in one-letter code: Homeobox protein Hox-D4 (255 aa).

The disordered stretch occupies residues 31 to 127 (EQGADYYGGG…PKQPPSGTAL (97 aa)). The segment covering 94-107 (EPCPAPPAPPPAPL) has biased composition (pro residues). The short motif at 133 to 138 (VYPWMK) is the Antp-type hexapeptide element. A DNA-binding region (homeobox) is located at residues 154–213 (PKRSRTAYTRQQVLELEKEFHFNRYLTRRRRIEIAHTLCLSERQIKIWFQNRRMKWKKDH). The disordered stretch occupies residues 212–255 (DHKLPNTKGRSSSSSSSSSCSSSVAPSQHLQPMAKDHHTDLTTL). Residues 222–234 (SSSSSSSSSCSSS) are compositionally biased toward low complexity. Positions 245-255 (AKDHHTDLTTL) are enriched in basic and acidic residues.

Belongs to the Antp homeobox family. Deformed subfamily. As to quaternary structure, forms a DNA-binding heterodimer with transcription factor PBX1.

The protein localises to the nucleus. Functionally, sequence-specific transcription factor which is part of a developmental regulatory system that provides cells with specific positional identities on the anterior-posterior axis. This Homo sapiens (Human) protein is Homeobox protein Hox-D4 (HOXD4).